We begin with the raw amino-acid sequence, 350 residues long: Alcohol dehydrogenase 1 (350 aa).

Zn(2+) contacts are provided by Cys-46, His-69, Cys-100, Cys-103, Cys-106, Cys-114, and Cys-156. NAD(+)-binding positions include 180–186 (GAAGGLG), Asp-204, Lys-209, 271–273 (VGL), and Arg-343.

Belongs to the zinc-containing alcohol dehydrogenase family. In terms of assembly, homotetramer. Zn(2+) is required as a cofactor.

Its subcellular location is the cytoplasm. It catalyses the reaction a primary alcohol + NAD(+) = an aldehyde + NADH + H(+). It carries out the reaction a secondary alcohol + NAD(+) = a ketone + NADH + H(+). The chain is Alcohol dehydrogenase 1 (ADH1) from Kluyveromyces lactis (strain ATCC 8585 / CBS 2359 / DSM 70799 / NBRC 1267 / NRRL Y-1140 / WM37) (Yeast).